We begin with the raw amino-acid sequence, 98 residues long: Large ribosomal subunit protein uL23 (98 aa).

It belongs to the universal ribosomal protein uL23 family. Part of the 50S ribosomal subunit. Contacts protein L29, and trigger factor when it is bound to the ribosome.

One of the early assembly proteins it binds 23S rRNA. One of the proteins that surrounds the polypeptide exit tunnel on the outside of the ribosome. Forms the main docking site for trigger factor binding to the ribosome. This Clostridium kluyveri (strain NBRC 12016) protein is Large ribosomal subunit protein uL23.